Reading from the N-terminus, the 683-residue chain is MPALSPAKKGTDKGKTGKKTGKQEQNAQDYIPPPPPMPGDEAFAMPIREIVKPDNQLWLSEADLNEEVAKMLTANNPAAPKNIVRFNMKDKVFKLEPMVEQTVVHYATDGWLLHKSSDEAKRQMDMEKMEQEASARFQADIDRASHEHKDHGDVEPPDDSRQLRNQFNFSERAAQTLNYPLRDRETFTEPPPTATVSGACTQWEIYDEYIKDLERQRIDEAMKSKGGKKAAAAARAAGAAHRQRNEHVPTLQSPTLMHSLGTLDRMVNQNMYEEVAMDFKYWDDASDAFRPGEGSLLPLWRFVSDKSKRRQVTSVCWNPLYDDMFAVGYGSYEFLKQASGLINIYSLKNPSHPEYTFHTESGVMCVHFHPEFANLLAVGCYDGSVLVYDVRLKKDEPIYQASVRTGKLNDPVWQIYWQPDDAQKSLQFVSISSDGAVNLWTLTKSELIPECLMKLRVVRAGETREEEDPNASGAAGGCCMDFCKMPGQESIYLVGTEEGAIHRCSKAYSSQYLSTYVSHHLAVYAVHWNNIHPSMFLSASCRLDHQAVGLCHDPKRAVMNFDLNDSIGDVSWAALQPTVFAAVTDDGRVHVFDLAQNKLLPLCSQKVVKKAKLTKLVFNPKHPIVLVGDDKGCVTSLKLSPNLRITSKPEKGQKFEDLEVAKLDGVVEIARKSDADLAKNAAH.

The disordered stretch occupies residues 1 to 42 (MPALSPAKKGTDKGKTGKKTGKQEQNAQDYIPPPPPMPGDEA). WD repeat units lie at residues 358 to 398 (HTES…DEPI), 407 to 450 (KLND…LIPE), 562 to 602 (DLND…LLPL), and 608 to 647 (VKKAKLTKLVFNPKHPIVLVGDDKGCVTSLKLSPNLRITS).

Belongs to the dynein intermediate chain family. Consists of at least 3 heavy chains (alpha, beta and gamma), 2 intermediate chains and 8 light chains.

It localises to the cytoplasm. Its subcellular location is the cytoskeleton. It is found in the flagellum axoneme. In terms of biological role, is essential for arm assembly or attachment to the outer doublet microtubule. This chain is Dynein, 78 kDa intermediate chain, flagellar outer arm (ODA9), found in Chlamydomonas reinhardtii (Chlamydomonas smithii).